The following is a 332-amino-acid chain: Large ribosomal subunit protein uL10 (332 aa).

The tract at residues 294-332 is disordered; that stretch reads QAAAAPVAVEDNTEEPEEEEEEEEDAAESAAAGLGALFG. Residues 304 to 320 show a composition bias toward acidic residues; sequence DNTEEPEEEEEEEEDAA.

It belongs to the universal ribosomal protein uL10 family. As to quaternary structure, part of the 50S ribosomal subunit. Forms part of the ribosomal stalk which helps the ribosome interact with GTP-bound translation factors. Forms a heptameric L10(L12)2(L12)2(L12)2 complex, where L10 forms an elongated spine to which the L12 dimers bind in a sequential fashion.

In terms of biological role, forms part of the ribosomal stalk, playing a central role in the interaction of the ribosome with GTP-bound translation factors. In Methanosphaera stadtmanae (strain ATCC 43021 / DSM 3091 / JCM 11832 / MCB-3), this protein is Large ribosomal subunit protein uL10.